Consider the following 304-residue polypeptide: Probable solute-binding protein AdeT1 (304 aa).

It belongs to the bacterial solute-binding protein 7 family.

Mediates antimicrobial resistance via active efflux. Contributes to resistance to antibiotics such as chloramphenicol, erythromycin and novobiocin. May be part of a tripartite ATP-independent periplasmic (TRAP) transport system. This is Probable solute-binding protein AdeT1 from Acinetobacter baumannii.